We begin with the raw amino-acid sequence, 461 residues long: MSLGKVVQIIGAVVDIEFPQNNVPAVYDALRVTDGDLTGLTLEVQQQLGGGVVRTIAMGTTDGLRRGASVMNTGESIQVPVGKATLGRIMNVLGEPIDEAGPIGEEDRMSIHRAAPTYEEQSSSVELLETGIKVIDLVCPFAKGGKVGLFGGAGVGKTVNMMELIRNIAIEHSGYSVFAGVGERTREGNDFYHEMNDSNVLDKVSLVYGQMNEPPGNRLRVALTGLTMAEKFRDEGRDVLFFVDNIYRYTLAGTEVSALLGRMPSAVGYQPTLAEEMGVLQERIASTKTGSITSIQAVYVPADDLTDPSPATTFAHLDATVVLSRDIASLGIYPAVDPLDSSSRQLDPQVIGQEHYDTARGVQTVLQRYKELKDIIAILGMDELSDEDKQLVSRARKIQRFLSQPFFVAEVFTGASGKYVSLKDTISGFKGILNGEFDDMPEQAFYMVGSIEEAQEKAKSM.

Residue 151-158 (GGAGVGKT) coordinates ATP.

Belongs to the ATPase alpha/beta chains family. In terms of assembly, F-type ATPases have 2 components, CF(1) - the catalytic core - and CF(0) - the membrane proton channel. CF(1) has five subunits: alpha(3), beta(3), gamma(1), delta(1), epsilon(1). CF(0) has three main subunits: a(1), b(2) and c(9-12). The alpha and beta chains form an alternating ring which encloses part of the gamma chain. CF(1) is attached to CF(0) by a central stalk formed by the gamma and epsilon chains, while a peripheral stalk is formed by the delta and b chains.

It is found in the cell inner membrane. The enzyme catalyses ATP + H2O + 4 H(+)(in) = ADP + phosphate + 5 H(+)(out). Its function is as follows. Produces ATP from ADP in the presence of a proton gradient across the membrane. The catalytic sites are hosted primarily by the beta subunits. The chain is ATP synthase subunit beta from Pseudoalteromonas translucida (strain TAC 125).